The chain runs to 140 residues: Bacilliredoxin STH2395 (140 aa).

It belongs to the bacilliredoxin family.

The sequence is that of Bacilliredoxin STH2395 from Symbiobacterium thermophilum (strain DSM 24528 / JCM 14929 / IAM 14863 / T).